Here is a 204-residue protein sequence, read N- to C-terminus: uncharacterized protein (204 aa).

A helical membrane pass occupies residues 160 to 180 (GLTVAAIASVVVAGAVTYLVV).

To M.pneumoniae MPN_373 C-terminal region.

It localises to the cell membrane. This is an uncharacterized protein from Mycoplasma pneumoniae (strain ATCC 29342 / M129 / Subtype 1) (Mycoplasmoides pneumoniae).